The following is a 199-amino-acid chain: Recombination protein RecR (199 aa).

The C4-type zinc-finger motif lies at 58-73; that stretch reads CSACGNVDTQDPCAIC. The 96-residue stretch at 81–176 folds into the Toprim domain; that stretch reads HILCIVEEVG…SVSRLAHGVP (96 aa).

It belongs to the RecR family.

Its function is as follows. May play a role in DNA repair. It seems to be involved in an RecBC-independent recombinational process of DNA repair. It may act with RecF and RecO. This chain is Recombination protein RecR, found in Parvibaculum lavamentivorans (strain DS-1 / DSM 13023 / NCIMB 13966).